The sequence spans 430 residues: Pyrroloquinoline quinone-dependent sugar dehydrogenase (430 aa).

The signal sequence occupies residues 1–23 (MARLAPHTLLLALFVFLFGSCTA). N-linked (GlcNAc...) asparagine glycosylation is present at N25. R57 is a binding site for pyrroloquinoline quinone. 2 N-linked (GlcNAc...) asparagine glycosylation sites follow: N94 and N147. H153 lines the pyrroloquinoline quinone pocket. Residue N184 is glycosylated (N-linked (GlcNAc...) asparagine). R220 serves as a coordination point for pyrroloquinoline quinone. Positions 240 and 242 each coordinate Ca(2+). A disulfide bridge connects residues C281 and C316. A glycan (N-linked (GlcNAc...) asparagine) is linked at N306. A pyrroloquinoline quinone-binding site is contributed by H330. N341 carries N-linked (GlcNAc...) asparagine glycosylation. H350 contacts pyrroloquinoline quinone. The cysteines at positions 388 and 392 are disulfide-linked.

Belongs to the sugar dehydrogenase AA12 family. The cofactor is Ca(2+). It depends on pyrroloquinoline quinone as a cofactor.

It is found in the secreted. Functionally, pyrroloquinoline quinone (PPQ)-dependent oxidoreductase that catalyzes the oxidation of various sugars such as L-fucose. This is Pyrroloquinoline quinone-dependent sugar dehydrogenase from Hypocrea jecorina (strain QM6a) (Trichoderma reesei).